The sequence spans 360 residues: Phospho-N-acetylmuramoyl-pentapeptide-transferase (360 aa).

10 helical membrane passes run 26–46 (SIMA…KVIN), 73–93 (TMGG…WADL), 98–118 (VWFT…DDYW), 132–152 (WKYF…YAMG), 168–188 (VMPQ…VGTS), 199–219 (GLAI…AWAT), 236–256 (SGEL…FLWY), 263–283 (VFMG…IAVL), 288–308 (LLLL…ILQV), and 338–358 (VIVR…VTLK).

This sequence belongs to the glycosyltransferase 4 family. MraY subfamily. Requires Mg(2+) as cofactor.

It is found in the cell inner membrane. It catalyses the reaction UDP-N-acetyl-alpha-D-muramoyl-L-alanyl-gamma-D-glutamyl-meso-2,6-diaminopimeloyl-D-alanyl-D-alanine + di-trans,octa-cis-undecaprenyl phosphate = di-trans,octa-cis-undecaprenyl diphospho-N-acetyl-alpha-D-muramoyl-L-alanyl-D-glutamyl-meso-2,6-diaminopimeloyl-D-alanyl-D-alanine + UMP. It functions in the pathway cell wall biogenesis; peptidoglycan biosynthesis. Its function is as follows. Catalyzes the initial step of the lipid cycle reactions in the biosynthesis of the cell wall peptidoglycan: transfers peptidoglycan precursor phospho-MurNAc-pentapeptide from UDP-MurNAc-pentapeptide onto the lipid carrier undecaprenyl phosphate, yielding undecaprenyl-pyrophosphoryl-MurNAc-pentapeptide, known as lipid I. The protein is Phospho-N-acetylmuramoyl-pentapeptide-transferase of Haemophilus ducreyi (strain 35000HP / ATCC 700724).